The following is a 141-amino-acid chain: Large ribosomal subunit protein bL17 (141 aa).

Belongs to the bacterial ribosomal protein bL17 family. As to quaternary structure, part of the 50S ribosomal subunit. Contacts protein L32.

This chain is Large ribosomal subunit protein bL17, found in Allorhizobium ampelinum (strain ATCC BAA-846 / DSM 112012 / S4) (Agrobacterium vitis (strain S4)).